A 166-amino-acid chain; its full sequence is ATP synthase subunit b (166 aa).

A helical transmembrane segment spans residues 15–37 (TLYYLLIFAALLLLVKHFAWGPV).

Belongs to the ATPase B chain family. As to quaternary structure, F-type ATPases have 2 components, F(1) - the catalytic core - and F(0) - the membrane proton channel. F(1) has five subunits: alpha(3), beta(3), gamma(1), delta(1), epsilon(1). F(0) has three main subunits: a(1), b(2) and c(10-14). The alpha and beta chains form an alternating ring which encloses part of the gamma chain. F(1) is attached to F(0) by a central stalk formed by the gamma and epsilon chains, while a peripheral stalk is formed by the delta and b chains.

Its subcellular location is the cell membrane. Functionally, f(1)F(0) ATP synthase produces ATP from ADP in the presence of a proton or sodium gradient. F-type ATPases consist of two structural domains, F(1) containing the extramembraneous catalytic core and F(0) containing the membrane proton channel, linked together by a central stalk and a peripheral stalk. During catalysis, ATP synthesis in the catalytic domain of F(1) is coupled via a rotary mechanism of the central stalk subunits to proton translocation. In terms of biological role, component of the F(0) channel, it forms part of the peripheral stalk, linking F(1) to F(0). In Lactobacillus gasseri (strain ATCC 33323 / DSM 20243 / BCRC 14619 / CIP 102991 / JCM 1131 / KCTC 3163 / NCIMB 11718 / NCTC 13722 / AM63), this protein is ATP synthase subunit b.